Consider the following 234-residue polypeptide: Proteasome subunit alpha type-2 (234 aa).

A2 is subject to N-acetylalanine. A Phosphotyrosine modification is found at Y121.

This sequence belongs to the peptidase T1A family. In terms of assembly, the 26S proteasome consists of a 20S proteasome core and two 19S regulatory subunits. The 20S proteasome core is composed of 28 subunits that are arranged in four stacked rings, resulting in a barrel-shaped structure. The two end rings are each formed by seven alpha subunits, and the two central rings are each formed by seven beta subunits. The catalytic chamber with the active sites is on the inside of the barrel.

The protein resides in the cytoplasm. It localises to the nucleus. Its function is as follows. The proteasome is a multicatalytic proteinase complex which is characterized by its ability to cleave peptides with Arg, Phe, Tyr, Leu, and Glu adjacent to the leaving group at neutral or slightly basic pH. The proteasome has an ATP-dependent proteolytic activity. PSMA2 may have a potential regulatory effect on another component(s) of the proteasome complex through tyrosine phosphorylation. The sequence is that of Proteasome subunit alpha type-2 (psma2) from Carassius auratus (Goldfish).